Reading from the N-terminus, the 201-residue chain is UPF0301 protein Rleg2_0617 (201 aa).

It belongs to the UPF0301 (AlgH) family.

The chain is UPF0301 protein Rleg2_0617 from Rhizobium leguminosarum bv. trifolii (strain WSM2304).